Here is a 436-residue protein sequence, read N- to C-terminus: Protein translocase subunit SecY (436 aa).

The next 8 membrane-spanning stretches (helical) occupy residues 17–37, 72–92, 122–142, 146–166, 209–229, 269–289, 309–329, and 380–400; these read ILLT…PVPY, FGLL…IQLL, TFFW…EVIF, LQVY…VLWF, FSNI…CIYI, VMPL…FEII, ISYW…IFFF, and IFLI…NLNI.

The protein belongs to the SecY/SEC61-alpha family. As to quaternary structure, component of the plastid Sec protein translocase complex, which is composed of at least SecY and SecE.

The protein resides in the plastid. Its subcellular location is the chloroplast thylakoid membrane. Its function is as follows. The central subunit of the protein translocation channel SecYE. Consists of two halves. These two domains form a lateral gate at the front which open onto the bilayer between TMs 2 and 7, and are clamped together by SecE at the back. The channel is closed by both a pore ring composed of hydrophobic SecY resides and a short helix (helix 2A) on the extracellular side of the membrane which forms a plug. This chain is Protein translocase subunit SecY, found in Vaucheria litorea (Yellow-green alga).